A 498-amino-acid chain; its full sequence is ATP synthase subunit beta, chloroplastic (498 aa).

Residue 172 to 179 (GGAGVGKT) participates in ATP binding.

Belongs to the ATPase alpha/beta chains family. In terms of assembly, F-type ATPases have 2 components, CF(1) - the catalytic core - and CF(0) - the membrane proton channel. CF(1) has five subunits: alpha(3), beta(3), gamma(1), delta(1), epsilon(1). CF(0) has four main subunits: a(1), b(1), b'(1) and c(9-12).

It is found in the plastid. Its subcellular location is the chloroplast thylakoid membrane. The enzyme catalyses ATP + H2O + 4 H(+)(in) = ADP + phosphate + 5 H(+)(out). Functionally, produces ATP from ADP in the presence of a proton gradient across the membrane. The catalytic sites are hosted primarily by the beta subunits. The protein is ATP synthase subunit beta, chloroplastic of Carica papaya (Papaya).